A 204-amino-acid polypeptide reads, in one-letter code: SOSS complex subunit B homolog (204 aa).

The segment at residues 24-94 is a DNA-binding region (OB); sequence IVLEVGVATV…TLYSGKNGEV (71 aa). Residues 115–204 form a disordered region; it reads RAEQQAVANP…GRGGLKGERR (90 aa). 2 stretches are compositionally biased toward low complexity: residues 122 to 131 and 139 to 183; these read ANPAATPAGL and GLPA…QTTT. Residues 187-198 are compositionally biased toward gly residues; it reads TRGGRGGGGRGG.

The protein belongs to the SOSS-B family.

The protein is SOSS complex subunit B homolog of Drosophila melanogaster (Fruit fly).